A 240-amino-acid polypeptide reads, in one-letter code: Uridylate kinase (240 aa).

13–16 (KASG) is a binding site for ATP. The segment at 21-26 (GSQGFG) is involved in allosteric activation by GTP. Gly55 is a binding site for UMP. ATP is bound by residues Gly56 and Arg60. UMP-binding positions include Asp75 and 136-143 (TGNPFFTT). Thr163, Gln164, Tyr169, and Asp172 together coordinate ATP.

The protein belongs to the UMP kinase family. As to quaternary structure, homohexamer.

It is found in the cytoplasm. The enzyme catalyses UMP + ATP = UDP + ADP. It functions in the pathway pyrimidine metabolism; CTP biosynthesis via de novo pathway; UDP from UMP (UMPK route): step 1/1. Allosterically activated by GTP. Inhibited by UTP. Functionally, catalyzes the reversible phosphorylation of UMP to UDP. The polypeptide is Uridylate kinase (Brucella abortus biovar 1 (strain 9-941)).